Here is a 501-residue protein sequence, read N- to C-terminus: ATP synthase subunit alpha (501 aa).

169 to 176 is an ATP binding site; sequence GDRQTGKT.

Belongs to the ATPase alpha/beta chains family. In terms of assembly, F-type ATPases have 2 components, CF(1) - the catalytic core - and CF(0) - the membrane proton channel. CF(1) has five subunits: alpha(3), beta(3), gamma(1), delta(1), epsilon(1). CF(0) has three main subunits: a(1), b(2) and c(9-12). The alpha and beta chains form an alternating ring which encloses part of the gamma chain. CF(1) is attached to CF(0) by a central stalk formed by the gamma and epsilon chains, while a peripheral stalk is formed by the delta and b chains.

It is found in the cell inner membrane. The catalysed reaction is ATP + H2O + 4 H(+)(in) = ADP + phosphate + 5 H(+)(out). Its function is as follows. Produces ATP from ADP in the presence of a proton gradient across the membrane. The alpha chain is a regulatory subunit. This Campylobacter jejuni subsp. jejuni serotype O:6 (strain 81116 / NCTC 11828) protein is ATP synthase subunit alpha.